Consider the following 662-residue polypeptide: Probable quinol oxidase subunit 1 (662 aa).

The next 2 membrane-spanning stretches (helical) occupy residues 14–34 (WMIT…IAVI) and 58–78 (IMYL…ALLI). Position 102 (His-102) interacts with Fe(II)-heme a. 8 consecutive transmembrane segments (helical) span residues 103-123 (GVIM…NIVV), 140-160 (VSFW…IIGG), 187-207 (IAIQ…FVTI), 228-248 (FITT…LALM), 273-293 (FFWV…FGIY), 311-331 (MVWA…HHFF), 336-356 (GALI…PTGV), and 376-396 (MLFS…GVML). His-279, Tyr-283, His-328, and His-329 together coordinate Cu cation. The 1'-histidyl-3'-tyrosine (His-Tyr) cross-link spans 279 to 283 (HPEVY). His-414 provides a ligand contact to heme a3. Helical transmembrane passes span 415 to 435 (FHYT…IFWY), 451 to 471 (CFWF…ILGL), 493 to 513 (ISTI…VSIV), 587 to 604 (PVGF…FFLI), and 608 to 627 (VIPA…YRSF). His-416 is a binding site for Fe(II)-heme a.

This sequence belongs to the heme-copper respiratory oxidase family. It depends on Cu cation as a cofactor. Ferriheme a serves as cofactor. Heme A3. is required as a cofactor.

The protein localises to the cell membrane. The enzyme catalyses 2 a quinol + O2 = 2 a quinone + 2 H2O. Its pathway is energy metabolism; oxidative phosphorylation. Its function is as follows. Catalyzes quinol oxidation with the concomitant reduction of oxygen to water. This chain is Probable quinol oxidase subunit 1 (qoxB), found in Staphylococcus aureus (strain USA300).